The primary structure comprises 154 residues: Ribonuclease HI (154 aa).

The RNase H type-1 domain occupies 1–142 (MPKQIEIFTD…CDELAKKGAE (142 aa)). Positions 10, 48, 70, and 134 each coordinate Mg(2+).

This sequence belongs to the RNase H family. Monomer. Requires Mg(2+) as cofactor.

Its subcellular location is the cytoplasm. The catalysed reaction is Endonucleolytic cleavage to 5'-phosphomonoester.. Its function is as follows. Endonuclease that specifically degrades the RNA of RNA-DNA hybrids. The chain is Ribonuclease HI (rnhA) from Haemophilus influenzae (strain ATCC 51907 / DSM 11121 / KW20 / Rd).